The primary structure comprises 150 residues: CASP-like protein 2 (150 aa).

Residues 1–17 (MKPEAGDGRSGWRWVAT) are Cytoplasmic-facing. The chain crosses the membrane as a helical span at residues 18–38 (FDLILRLAAIVATSTAVLAAM). At 39 to 41 (GKT) the chain is on the extracellular side. The helical transmembrane segment at 42–62 (FVVVVNGVACFYLLMSLPVSI) threads the bilayer. The Cytoplasmic portion of the chain corresponds to 63–82 (FNIMRPGACPANRAVLTALD). Residues 83–103 (MVTVALVTAGALVAGILYLVH) form a helical membrane-spanning segment. Residues 104 to 121 (KAGDTHADWFSIWSQLDS) are Extracellular-facing. Residues 122-142 (LSYLAVLALILHVLLSGSILY) traverse the membrane as a helical segment. Residues 143-150 (KQALNIMF) lie on the Cytoplasmic side of the membrane.

It belongs to the Casparian strip membrane proteins (CASP) family. In terms of assembly, homodimer and heterodimers.

Its subcellular location is the cell membrane. The polypeptide is CASP-like protein 2 (Picea sitchensis (Sitka spruce)).